The primary structure comprises 314 residues: Ficolin-2 (314 aa).

A signal peptide spans 1–17; the sequence is MALGSAALFVLTLTVHA. One can recognise a Collagen-like domain in the interval 40–96; the sequence is GCPGLPGAAGPKGEAGAKGDRGESGLPGIPGKEGPTGPKGNQGEKGIRGEKGDSGPS. The disordered stretch occupies residues 49–101; that stretch reads GPKGEAGAKGDRGESGLPGIPGKEGPTGPKGNQGEKGIRGEKGDSGPSQSCAT. The 218-residue stretch at 97 to 314 folds into the Fibrinogen C-terminal domain; the sequence is QSCATGPRTC…KVSEMKVRLI (218 aa). 2 disulfide bridges follow: Cys-99/Cys-127 and Cys-106/Cys-134. Asp-250, Asp-252, Ser-254, and Ser-256 together coordinate Ca(2+). Cys-258 and Cys-271 form a disulfide bridge. N-linked (GlcNAc...) asparagine glycosylation occurs at Asn-301.

It belongs to the ficolin lectin family. Homotrimer. Interacts with elastin. Interacts with MASP1 and MASP2.

It localises to the secreted. In terms of biological role, may function in innate immunity through activation of the lectin complement pathway. Calcium-dependent and GlcNAc-binding lectin. The polypeptide is Ficolin-2 (Fcn2) (Mus musculus (Mouse)).